The sequence spans 414 residues: MAGMAPEGSQFDAKHYDSKMQELLNQGETEEFFTSYDEVHESFDDMGLQENLLRGIYAYGFEKPSAIQQRGIVPFCKGLDVIQQAQSGTGKTATFCSGILQQLDYAVVECQALVLAPTRELAQQIEKVMRALGDYLGVKVHACVGGTSVREDQRILASGVHVVVGTPGRVFDMLRRQSLRPDYIKMFVLDEADEMLSRGFKDQIYDIFQLLPSKIQVGVFSATMPPEALEITRKFMNKPVRILVKRDELTLEGIKQFYVNVEKEEWKLDTLCDLYETLAITQSVIFVNTRRKVDWLTDKMRGRDHTVSATHGDMDQNTRDIIMREFRSGSSRVLITTDLLARGIDVQQVSLVINYDLPTQPENYLHRIGRSGRFGRKGVAINFVTRDDERMLFDIQRFYNVVIEELPANVADLL.

The short motif at 41-69 is the Q motif element; the sequence is ESFDDMGLQENLLRGIYAYGFEKPSAIQQ. The 171-residue stretch at 72 to 242 folds into the Helicase ATP-binding domain; it reads IVPFCKGLDV…RKFMNKPVRI (171 aa). ATP is bound at residue 85–92; sequence AQSGTGKT. The DEAD box motif lies at 190–193; the sequence is DEAD. The 162-residue stretch at 253–414 folds into the Helicase C-terminal domain; it reads GIKQFYVNVE…ELPANVADLL (162 aa).

The protein belongs to the DEAD box helicase family. eIF4A subfamily. As to quaternary structure, eIF4F is a multi-subunit complex, the composition of which varies with external and internal environmental conditions. It is composed of at least EIF4A, EIF4E and EIF4G.

The enzyme catalyses ATP + H2O = ADP + phosphate + H(+). Functionally, ATP-dependent RNA helicase which is a subunit of the eIF4F complex involved in cap recognition and is required for mRNA binding to ribosome. In the current model of translation initiation, eIF4A unwinds RNA secondary structures in the 5'-UTR of mRNAs which is necessary to allow efficient binding of the small ribosomal subunit, and subsequent scanning for the initiator codon. The polypeptide is Eukaryotic initiation factor 4A-1 (Oryza sativa subsp. japonica (Rice)).